A 749-amino-acid chain; its full sequence is MARGNRRNGSRRGSGTTGSSGSSRGRNNKNRGRGGSSSTSRRAANGGKRAGAGKFNAPELMDLDFGAIDDVNMGTGSMRSLSKRPGRNTMMQEAFLTSKHTDRFVGEPLRKRPIEFIKAKEVYDPRAILEKVINKDEANDADEATDITVSLRETTIAEQNEDNVNLDHDENEKENEKEDVEDQKPVEKDEESKDNLEGLREAIENDEKVKSAKIDDETLEQPTIEMEDSDNEDDSQSDSEGFFIDTSAQPTNSPPAYVPPNDIGPNIDYDPVLTIGNVQLHTSGAGNDITASVRSSTHHDELDSLDEFSDSESDEDAYADYIRQLNEQDSSEELSSSDSENESASTDANVSSTNSPQIVEYGFLSEDYEFDVSQISVTNVRFGIKNQFYSRCLELTGSVDDYMWVDEDDLIDFVTSKGVKEHRLESFLSYITNGMINKTENDEEEEQEVYVSSDSESDREIYGGTAPEIEEDDDGIADLVAFSKSSTKFRDTIDTSAVGTTGKGSRKQLDLERFAQYELDDDIIDSLQQQYKIRRESKKSKKQQHQDELMEEGLNKYNLLLKYPYTLHIKDIKDEFESFLHNPARDDLSFPPLDPHGNKTLTKMAKCYNCKSATQGKGIRRYIRVSKYKRTFKYLPDYGHINAILRQRPVFNRVDQKRPKEEYIATDGNATKDRIRQRNKSGHNAYIPEGHIVGGMAPEIDHTNVGRQLLEKLGWVKGEGLGAHGNKGISEPLVATVKKSKTGLGQTRY.

A compositionally biased stretch (basic residues) spans 1–10; that stretch reads MARGNRRNGS. Disordered regions lie at residues 1–56, 153–265, 289–315, 327–353, and 441–461; these read MARG…GKFN, ETTI…DIGP, ITAS…ESDE, EQDS…VSST, and NDEE…DREI. Low complexity-rich tracts occupy residues 11–25 and 36–56; these read RRGS…SSRG and SSST…GKFN. The span at 165–216 shows a compositional bias: basic and acidic residues; that stretch reads NLDHDENEKENEKEDVEDQKPVEKDEESKDNLEGLREAIENDEKVKSAKIDD. Acidic residues-rich tracts occupy residues 225–237 and 303–315; these read EMED…DSQS and DSLD…ESDE. Over residues 327–338 the composition is skewed to low complexity; the sequence is EQDSSEELSSSD. Positions 344 to 353 are enriched in polar residues; that stretch reads ASTDANVSST. In terms of domain architecture, R3H spans 566–629; the sequence is TLHIKDIKDE…RRYIRVSKYK (64 aa). The region spanning 702–749 is the G-patch domain; the sequence is HTNVGRQLLEKLGWVKGEGLGAHGNKGISEPLVATVKKSKTGLGQTRY.

This sequence belongs to the SQS1 family.

Its subcellular location is the cytoplasm. It localises to the nucleus. Functionally, may be involved in splicing. The sequence is that of Protein SQS1 (SQS1) from Meyerozyma guilliermondii (strain ATCC 6260 / CBS 566 / DSM 6381 / JCM 1539 / NBRC 10279 / NRRL Y-324) (Yeast).